An 84-amino-acid chain; its full sequence is MAESDAAAPAKAKPAALRKGALVKVNRAAYSSSLEAGASDPTAPDYIFEGPGELLVVKGDYGQVRWNRPVPDVWLRMDQLEACS.

Belongs to the complex I NdhO subunit family. NDH-1 can be composed of about 15 different subunits; different subcomplexes with different compositions have been identified which probably have different functions.

Its subcellular location is the cellular thylakoid membrane. It carries out the reaction a plastoquinone + NADH + (n+1) H(+)(in) = a plastoquinol + NAD(+) + n H(+)(out). The enzyme catalyses a plastoquinone + NADPH + (n+1) H(+)(in) = a plastoquinol + NADP(+) + n H(+)(out). Functionally, NDH-1 shuttles electrons from an unknown electron donor, via FMN and iron-sulfur (Fe-S) centers, to quinones in the respiratory and/or the photosynthetic chain. The immediate electron acceptor for the enzyme in this species is believed to be plastoquinone. Couples the redox reaction to proton translocation, and thus conserves the redox energy in a proton gradient. Cyanobacterial NDH-1 also plays a role in inorganic carbon-concentration. This Synechococcus sp. (strain CC9605) protein is NAD(P)H-quinone oxidoreductase subunit O.